The primary structure comprises 446 residues: sn-2 acyl-lipid omega-3 desaturase (ferredoxin), chloroplastic (446 aa).

A chloroplast-targeting transit peptide spans 1–65 (MANLVLSECG…DGFTRNWALN (65 aa)). 2 helical membrane-spanning segments follow: residues 118-138 (LSYVVRDVAIVFALAAGAAYL) and 141-161 (WIVWPLYWLAQGTMFWALFVL). The short motif at 163-167 (HDCGH) is the Histidine box-1 element. A Histidine box-2 motif is present at residues 199–203 (HRTHH). 3 consecutive transmembrane segments (helical) span residues 231 to 250 (RFFRFTLPLVMLAYPFYLWA), 279 to 299 (TACWTAMAALLVCLNFTIGPI), and 302 to 322 (LKLYGIPYWINVMWLDFVTYL). Residues 366–370 (HVIHH) carry the Histidine box-3 motif.

Belongs to the fatty acid desaturase type 1 family. As to expression, most abundant in leaves and seedlings.

The protein resides in the plastid. It localises to the chloroplast inner membrane. It catalyses the reaction a (7Z,10Z)-hexadecadienoyl-containing glycerolipid + 2 reduced [2Fe-2S]-[ferredoxin] + O2 + 2 H(+) = a (7Z,10Z,13Z)-hexadecatrienoyl-containing glycerolipid + 2 oxidized [2Fe-2S]-[ferredoxin] + 2 H2O. It carries out the reaction a (9Z,12Z)-octadecadienoyl-containing glycerolipid + 2 reduced [2Fe-2S]-[ferredoxin] + O2 + 2 H(+) = (9Z,12Z,15Z)-octadecatrienoyl-containing glycerolipid + 2 oxidized [2Fe-2S]-[ferredoxin] + 2 H2O. The protein operates within lipid metabolism; polyunsaturated fatty acid biosynthesis. Functionally, chloroplast omega-3 fatty acid desaturase introduces the third double bond in the biosynthesis of 16:3 and 18:3 fatty acids, important constituents of plant membranes. It is thought to use ferredoxin as an electron donor and to act on fatty acids esterified to galactolipids, sulfolipids and phosphatidylglycerol. The polypeptide is sn-2 acyl-lipid omega-3 desaturase (ferredoxin), chloroplastic (Arabidopsis thaliana (Mouse-ear cress)).